We begin with the raw amino-acid sequence, 359 residues long: UPF0283 membrane protein R01807 (359 aa).

The next 2 helical transmembrane spans lie at 76 to 96 and 109 to 129; these read FGKI…GLWI and WLGY…LIVV.

It belongs to the UPF0283 family.

Its subcellular location is the cell inner membrane. This chain is UPF0283 membrane protein R01807, found in Rhizobium meliloti (strain 1021) (Ensifer meliloti).